A 419-amino-acid chain; its full sequence is MAPK/MAK/MRK overlapping kinase (419 aa).

One can recognise a Protein kinase domain in the interval 4–285; the sequence is YKAIGKIGEG…AHQALQHPYF (282 aa). ATP is bound by residues 10–18 and Lys33; that span reads IGEGTFSEV. The Proton acceptor role is filled by Asp128. Disordered regions lie at residues 285–344 and 390–419; these read FQEQ…RGPA and PASK…KGGR. Basic and acidic residues-rich tracts occupy residues 322-338 and 393-402; these read KEGR…EDRP and KKTDPQKDLK.

Belongs to the protein kinase superfamily. CMGC Ser/Thr protein kinase family. CDC2/CDKX subfamily. Mg(2+) is required as a cofactor. Autophosphorylated. In terms of tissue distribution, expressed in heart, brain, lung, kidney, and pancreas, and at very low levels in placenta, liver and skeletal muscle. Detected in retina.

Its subcellular location is the cytoplasm. It localises to the cell projection. The protein localises to the cilium. It is found in the nucleus. The enzyme catalyses L-seryl-[protein] + ATP = O-phospho-L-seryl-[protein] + ADP + H(+). It catalyses the reaction L-threonyl-[protein] + ATP = O-phospho-L-threonyl-[protein] + ADP + H(+). Phosphorylation appears to increase the enzymatic activity. Functionally, able to phosphorylate several exogenous substrates and to undergo autophosphorylation. Negatively regulates cilium length in a cAMP and mTORC1 signaling-dependent manner. In Homo sapiens (Human), this protein is MAPK/MAK/MRK overlapping kinase (MOK).